Here is a 509-residue protein sequence, read N- to C-terminus: Dihydrolipoyl dehydrogenase, mitochondrial (509 aa).

Residues 1–35 (MQSWSRVYCSLAKRGHFNRISHGLQGLSAVPLRTY) constitute a mitochondrion transit peptide. The residue at position 66 (lysine 66) is an N6-acetyllysine; alternate. An N6-succinyllysine; alternate modification is found at lysine 66. FAD is bound by residues 71–80 (EKNETLGGTC) and lysine 89. Cysteine 80 and cysteine 85 form a disulfide bridge. N6-acetyllysine; alternate is present on residues lysine 104, lysine 122, lysine 132, and lysine 143. An N6-succinyllysine; alternate mark is found at lysine 104, lysine 122, lysine 132, and lysine 143. FAD is bound at residue glycine 154. An N6-succinyllysine mark is found at lysine 159 and lysine 166. 183–185 (TGS) contacts FAD. NAD(+) is bound by residues 220–227 (GAGVIGVE) and glutamate 243. 2 positions are modified to N6-succinyllysine: lysine 273 and lysine 277. Residue valine 278 coordinates NAD(+). Phosphoserine is present on residues serine 285 and serine 297. Glycine 314 contacts NAD(+). An N6-acetyllysine modification is found at lysine 346. FAD contacts are provided by residues aspartate 355 and 361–364 (MLAH). Lysine 410 is modified (N6-acetyllysine; alternate). Lysine 410 carries the post-translational modification N6-succinyllysine; alternate. Lysine 417 and lysine 420 each carry N6-acetyllysine. At lysine 430 the chain carries N6-succinyllysine. Histidine 487 serves as the catalytic Proton acceptor. Serine 502 carries the post-translational modification Phosphoserine. The residue at position 505 (lysine 505) is an N6-acetyllysine; alternate. Residue lysine 505 is modified to N6-succinyllysine; alternate.

It belongs to the class-I pyridine nucleotide-disulfide oxidoreductase family. Homodimer. Part of the multimeric pyruvate dehydrogenase complex that contains multiple copies of pyruvate dehydrogenase (subunits PDHA (PDHA1 or PDHA2) and PDHB, E1), dihydrolipoamide acetyltransferase (DLAT, E2) and lipoamide dehydrogenase (DLD, E3). These subunits are bound to an inner core composed of about 48 DLAT and 12 PDHX molecules (by non covalent bonds). The 2-oxoglutarate dehydrogenase complex is composed of OGDH (2-oxoglutarate dehydrogenase; E1), DLST (dihydrolipoamide succinyltransferase; E2), DLD (dihydrolipoamide dehydrogenase; E3) and the assembly factor KGD4. It contains multiple copies of the three enzymatic components (E1, E2 and E3). In the nucleus, the 2-oxoglutarate dehydrogenase complex associates with KAT2A. Interacts with PDHX. The cofactor is FAD. In terms of processing, tyrosine phosphorylated.

The protein localises to the mitochondrion matrix. Its subcellular location is the nucleus. The protein resides in the cell projection. It is found in the cilium. It localises to the flagellum. The protein localises to the cytoplasmic vesicle. Its subcellular location is the secretory vesicle. The protein resides in the acrosome. It catalyses the reaction N(6)-[(R)-dihydrolipoyl]-L-lysyl-[protein] + NAD(+) = N(6)-[(R)-lipoyl]-L-lysyl-[protein] + NADH + H(+). Disruption of native heterodimer state inhibits primary dihydrolipoamide dehydrogenase activity and induces serine protease activity. Functionally, lipoamide dehydrogenase is a component of the glycine cleavage system as well as an E3 component of three alpha-ketoacid dehydrogenase complexes (pyruvate-, alpha-ketoglutarate-, and branched-chain amino acid-dehydrogenase complex). The 2-oxoglutarate dehydrogenase complex is mainly active in the mitochondrion. A fraction of the 2-oxoglutarate dehydrogenase complex also localizes in the nucleus and is required for lysine succinylation of histones: associates with KAT2A on chromatin and provides succinyl-CoA to histone succinyltransferase KAT2A. In monomeric form may have additional moonlighting function as serine protease. Involved in the hyperactivation of spermatazoa during capacitation and in the spermatazoal acrosome reaction. The protein is Dihydrolipoyl dehydrogenase, mitochondrial (DLD) of Homo sapiens (Human).